A 756-amino-acid polypeptide reads, in one-letter code: Catalase-peroxidase (756 aa).

The segment at residues 91–244 (WHSAGTYRTG…LAAVQMGLIY (154 aa)) is a cross-link (tryptophyl-tyrosyl-methioninium (Trp-Tyr) (with M-270)). H92 acts as the Proton acceptor in catalysis. Positions 198–230 (AQKKMQQPGDGTLVAEPENHANEESRTASGERN) are disordered. A compositionally biased stretch (basic and acidic residues) spans 214–223 (PENHANEESR). Residues 244–270 (YVNPEGPEGVPDPVASAKDIRETFGRM) constitute a cross-link (tryptophyl-tyrosyl-methioninium (Tyr-Met) (with W-91)). Residue H285 participates in heme b binding. The interval 371–390 (KNGAGAGKIPDAHDPSKRHA) is disordered.

This sequence belongs to the peroxidase family. Peroxidase/catalase subfamily. Homodimer or homotetramer. Heme b is required as a cofactor. In terms of processing, formation of the three residue Trp-Tyr-Met cross-link is important for the catalase, but not the peroxidase activity of the enzyme.

It catalyses the reaction H2O2 + AH2 = A + 2 H2O. The catalysed reaction is 2 H2O2 = O2 + 2 H2O. In terms of biological role, bifunctional enzyme with both catalase and broad-spectrum peroxidase activity. The sequence is that of Catalase-peroxidase from Pseudomonas savastanoi pv. phaseolicola (strain 1448A / Race 6) (Pseudomonas syringae pv. phaseolicola (strain 1448A / Race 6)).